Consider the following 320-residue polypeptide: Replication-associated protein ORF2 (320 aa).

Residues Tyr188 and Tyr192 each act as O-(5'-phospho-DNA)-tyrosine intermediate in the active site.

The protein belongs to the microviridae Rep protein family.

It catalyses the reaction ATP + (deoxyribonucleotide)n-3'-hydroxyl + 5'-phospho-(deoxyribonucleotide)m = (deoxyribonucleotide)n+m + AMP + diphosphate.. Its function is as follows. Plays an essential role in viral DNA replication. Binds the origin of replication and cleaves the dsDNA replicative form I (RFI) and becomes covalently bound to it via phosphotyrosine bond, generating the dsDNA replicative form II (RFII). In turn, viral DNA replication initiates at the 3'-OH of the cleavage site. After one round of rolling circle synthesis, protein ORF2 is linked to the newly synthesized ssDNA and joins the ends of the displaced strand to generate a circular single-stranded molecule ready to be packed into a virion. The protein is Replication-associated protein ORF2 of Spiroplasma virus 4 (SpV4).